We begin with the raw amino-acid sequence, 304 residues long: Putative ankyrin repeat protein R602 (304 aa).

6 ANK repeats span residues 82-117 (LIRYILYIAYQNHHQDCSVYYEMIKYLIDYGLDITF), 118-146 (NDNFAIKLASLCHENILKLVIDNGGDVHA), 147-176 (DNEFPICLAANHGRLSCVKLLVDCGVDPFC), 178-206 (DNIVIKLASIDYYDNVVEYMVSIGADINA), 207-236 (GNNYVLRYAIKNLDKKMIELAINAGASIND), and 238-266 (SPNDITHIIKYQSPTIMNILVEYGLDIST).

The protein is Putative ankyrin repeat protein R602 of Acanthamoeba polyphaga (Amoeba).